We begin with the raw amino-acid sequence, 958 residues long: Isoleucine--tRNA ligase (958 aa).

Positions 1 to 32 (MSDNQNKPGKPAAKPQSKYPVNMTDTPFPMRG) are disordered. The 'HIGH' region signature appears at 71–81 (PYANGDIHLGH). Glutamate 590 is a binding site for L-isoleucyl-5'-AMP. A 'KMSKS' region motif is present at residues 631–635 (KMSKS). ATP is bound at residue lysine 634. The Zn(2+) site is built by cysteine 921, cysteine 924, cysteine 941, and cysteine 944.

The protein belongs to the class-I aminoacyl-tRNA synthetase family. IleS type 1 subfamily. As to quaternary structure, monomer. The cofactor is Zn(2+).

It is found in the cytoplasm. The enzyme catalyses tRNA(Ile) + L-isoleucine + ATP = L-isoleucyl-tRNA(Ile) + AMP + diphosphate. In terms of biological role, catalyzes the attachment of isoleucine to tRNA(Ile). As IleRS can inadvertently accommodate and process structurally similar amino acids such as valine, to avoid such errors it has two additional distinct tRNA(Ile)-dependent editing activities. One activity is designated as 'pretransfer' editing and involves the hydrolysis of activated Val-AMP. The other activity is designated 'posttransfer' editing and involves deacylation of mischarged Val-tRNA(Ile). The polypeptide is Isoleucine--tRNA ligase (Janthinobacterium sp. (strain Marseille) (Minibacterium massiliensis)).